Here is a 605-residue protein sequence, read N- to C-terminus: FAD-linked oxidoreductase easE (605 aa).

The first 20 residues, 1-20 (MRHFVTFVVGFLLSWGFLSS), serve as a signal peptide directing secretion. Asparagine 46 and asparagine 105 each carry an N-linked (GlcNAc...) asparagine glycan. In terms of domain architecture, FAD-binding PCMH-type spans 122–307 (CHQGRLPLYS…TQATVRAFPD (186 aa)). A glycan (N-linked (GlcNAc...) asparagine) is linked at asparagine 370.

This sequence belongs to the oxygen-dependent FAD-linked oxidoreductase family. Requires FAD as cofactor.

The protein operates within alkaloid biosynthesis; ergot alkaloid biosynthesis. FAD-linked oxidoreductase; part of the gene cluster that mediates the biosynthesis of fungal ergot alkaloid ergovaline, the predominant ergopeptine product in E.festucae var. lolii. DmaW catalyzes the first step of ergot alkaloid biosynthesis by condensing dimethylallyl diphosphate (DMAP) and tryptophan to form 4-dimethylallyl-L-tryptophan. The second step is catalyzed by the methyltransferase easF that methylates 4-dimethylallyl-L-tryptophan in the presence of S-adenosyl-L-methionine, resulting in the formation of 4-dimethylallyl-L-abrine. The catalase easC and the FAD-dependent oxidoreductase easE then transform 4-dimethylallyl-L-abrine to chanoclavine-I which is further oxidized by easD in the presence of NAD(+), resulting in the formation of chanoclavine-I aldehyde. Agroclavine dehydrogenase easG then mediates the conversion of chanoclavine-I aldehyde to agroclavine via a non-enzymatic adduct reaction: the substrate is an iminium intermediate that is formed spontaneously from chanoclavine-I aldehyde in the presence of glutathione. The presence of easA is not required to complete this reaction. Further conversion of agroclavine to paspalic acid is a two-step process involving oxidation of agroclavine to elymoclavine and of elymoclavine to paspalic acid, the second step being performed by the elymoclavine oxidase cloA. Paspalic acid is then further converted to D-lysergic acid. Ergovaline is assembled from D-lysergic acid and three different amino acids by the D-lysergyl-peptide-synthetase composed of a monomudular (lpsB) and a trimodular (lpsA) nonribosomal peptide synthetase subunit. The polypeptide is FAD-linked oxidoreductase easE (Epichloe festucae var. lolii (Neotyphodium lolii)).